A 201-amino-acid chain; its full sequence is Interferon-induced transmembrane protein 10 (201 aa).

2 disordered regions span residues 1–23 and 60–88; these read MAQG…DGTQ and AAPA…KTDS. The Extracellular segment spans residues 1-127; sequence MAQGPSQCPA…PDTTEVNDYY (127 aa). Pro residues predominate over residues 63-73; sequence APEPSASPPMA. The chain crosses the membrane as a helical span at residues 128 to 148; that stretch reads LWSIFNFVYLNFCCLGFIALA. 2 S-palmitoyl cysteine lipidation sites follow: C140 and C141. The Cytoplasmic portion of the chain corresponds to 149–173; that stretch reads YSLKVRDKKLLNDLNGAVEDAKTAR. Residues 174–194 form a helical membrane-spanning segment; that stretch reads LFNITSSALAASCIILIFIFL. Over 195 to 201 the chain is Extracellular; the sequence is RYPLTDY.

Belongs to the CD225/Dispanin family.

It is found in the cell membrane. The chain is Interferon-induced transmembrane protein 10 (Ifitm10) from Mus musculus (Mouse).